We begin with the raw amino-acid sequence, 359 residues long: Methylthioribose-1-phosphate isomerase (359 aa).

Asp235 acts as the Proton donor in catalysis.

Belongs to the eIF-2B alpha/beta/delta subunits family. MtnA subfamily.

The protein localises to the cytoplasm. It is found in the nucleus. It catalyses the reaction 5-(methylsulfanyl)-alpha-D-ribose 1-phosphate = 5-(methylsulfanyl)-D-ribulose 1-phosphate. The protein operates within amino-acid biosynthesis; L-methionine biosynthesis via salvage pathway; L-methionine from S-methyl-5-thio-alpha-D-ribose 1-phosphate: step 1/6. Its function is as follows. Catalyzes the interconversion of methylthioribose-1-phosphate (MTR-1-P) into methylthioribulose-1-phosphate (MTRu-1-P). The chain is Methylthioribose-1-phosphate isomerase (mri1) from Schizosaccharomyces pombe (strain 972 / ATCC 24843) (Fission yeast).